A 126-amino-acid chain; its full sequence is Arginine decarboxylase proenzyme (126 aa).

Catalysis depends on serine 74, which acts as the Schiff-base intermediate with substrate; via pyruvic acid. Serine 74 bears the Pyruvic acid (Ser); by autocatalysis mark. Histidine 79 acts as the Proton acceptor; for processing activity in catalysis. Cysteine 94 (proton donor; for catalytic activity) is an active-site residue.

This sequence belongs to the prokaryotic AdoMetDC family. Type 1 subfamily. Heterooctamer of four alpha and four beta chains arranged as a tetramer of alpha/beta heterodimers. It depends on pyruvate as a cofactor. Post-translationally, is synthesized initially as an inactive proenzyme. Formation of the active enzyme involves a self-maturation process in which the active site pyruvoyl group is generated from an internal serine residue via an autocatalytic post-translational modification. Two non-identical subunits are generated from the proenzyme in this reaction, and the pyruvate is formed at the N-terminus of the alpha chain, which is derived from the carboxyl end of the proenzyme. The post-translation cleavage follows an unusual pathway, termed non-hydrolytic serinolysis, in which the side chain hydroxyl group of the serine supplies its oxygen atom to form the C-terminus of the beta chain, while the remainder of the serine residue undergoes an oxidative deamination to produce ammonia and the pyruvoyl group blocking the N-terminus of the alpha chain.

The enzyme catalyses L-arginine + H(+) = agmatine + CO2. The protein operates within amine and polyamine biosynthesis; agmatine biosynthesis; agmatine from L-arginine: step 1/1. In terms of biological role, specifically catalyzes the decarboxylation of L-arginine to agmatine. Has no S-adenosylmethionine decarboxylase (AdoMetDC) activity. In Pyrobaculum calidifontis (strain DSM 21063 / JCM 11548 / VA1), this protein is Arginine decarboxylase proenzyme.